We begin with the raw amino-acid sequence, 372 residues long: Alanine racemase (372 aa).

Residue lysine 33 is the Proton acceptor; specific for D-alanine of the active site. Lysine 33 bears the N6-(pyridoxal phosphate)lysine mark. Residue arginine 131 participates in substrate binding. Tyrosine 261 serves as the catalytic Proton acceptor; specific for L-alanine. Position 309 (methionine 309) interacts with substrate.

This sequence belongs to the alanine racemase family. Requires pyridoxal 5'-phosphate as cofactor.

It carries out the reaction L-alanine = D-alanine. It functions in the pathway amino-acid biosynthesis; D-alanine biosynthesis; D-alanine from L-alanine: step 1/1. Its function is as follows. Catalyzes the interconversion of L-alanine and D-alanine. May also act on other amino acids. This is Alanine racemase (alr) from Salinispora arenicola (strain CNS-205).